The sequence spans 375 residues: Probable aspartate aminotransferase (375 aa).

L-aspartate contacts are provided by G31 and N165. N6-(pyridoxal phosphate)lysine is present on K223. R353 lines the L-aspartate pocket.

The protein belongs to the class-I pyridoxal-phosphate-dependent aminotransferase family. Homodimer. Pyridoxal 5'-phosphate serves as cofactor.

It is found in the cytoplasm. The catalysed reaction is L-aspartate + 2-oxoglutarate = oxaloacetate + L-glutamate. The sequence is that of Probable aspartate aminotransferase from Methanocaldococcus jannaschii (strain ATCC 43067 / DSM 2661 / JAL-1 / JCM 10045 / NBRC 100440) (Methanococcus jannaschii).